A 504-amino-acid chain; its full sequence is UDP-N-acetylmuramoylalanine--D-glutamate ligase (504 aa).

129–135 (GTNGKTT) contributes to the ATP binding site.

This sequence belongs to the MurCDEF family.

The protein localises to the cytoplasm. The catalysed reaction is UDP-N-acetyl-alpha-D-muramoyl-L-alanine + D-glutamate + ATP = UDP-N-acetyl-alpha-D-muramoyl-L-alanyl-D-glutamate + ADP + phosphate + H(+). The protein operates within cell wall biogenesis; peptidoglycan biosynthesis. In terms of biological role, cell wall formation. Catalyzes the addition of glutamate to the nucleotide precursor UDP-N-acetylmuramoyl-L-alanine (UMA). In Cupriavidus metallidurans (strain ATCC 43123 / DSM 2839 / NBRC 102507 / CH34) (Ralstonia metallidurans), this protein is UDP-N-acetylmuramoylalanine--D-glutamate ligase.